A 144-amino-acid chain; its full sequence is 3-hydroxyacyl-[acyl-carrier-protein] dehydratase FabZ (144 aa).

Histidine 51 is a catalytic residue.

The protein belongs to the thioester dehydratase family. FabZ subfamily.

Its subcellular location is the cytoplasm. The catalysed reaction is a (3R)-hydroxyacyl-[ACP] = a (2E)-enoyl-[ACP] + H2O. Functionally, involved in unsaturated fatty acids biosynthesis. Catalyzes the dehydration of short chain beta-hydroxyacyl-ACPs and long chain saturated and unsaturated beta-hydroxyacyl-ACPs. This is 3-hydroxyacyl-[acyl-carrier-protein] dehydratase FabZ from Clostridium botulinum (strain 657 / Type Ba4).